A 1415-amino-acid polypeptide reads, in one-letter code: Bridge-like lipid transfer protein family member 3B (1415 aa).

The 92-residue stretch at 3 to 94 folds into the Chorein N-terminal domain; it reads GLIKKQILKH…DKVIMEMSTC (92 aa). Disordered regions lie at residues 267-300 and 882-904; these read STEQ…STTP and KSPL…SEGV. Residues 275–300 are compositionally biased toward polar residues; it reads ASETTQSPTPPVSSQQVKNPQTSTTP. A coiled-coil region spans residues 1367–1404; the sequence is KAAGISKEQLVEENECLKQELAKTKMALAESHMERDRL.

It is found in the cytoplasm. Its subcellular location is the cytosol. It localises to the early endosome. In terms of biological role, tube-forming lipid transport protein which mediates the transfer of lipids between membranes at organelle contact sites. Required for retrograde traffic of vesicle clusters in the early endocytic pathway to the Golgi complex. The protein is Bridge-like lipid transfer protein family member 3B (bltp3b) of Xenopus laevis (African clawed frog).